Reading from the N-terminus, the 265-residue chain is uncharacterized protein (265 aa).

The N-terminal stretch at 1–23 (MNYFRILYCSVLLFFSFFSCTSA) is a signal peptide. The NodB homology domain maps to 67-248 (KEIYLTFDNG…TLKQQGYTFK (182 aa)).

The protein belongs to the polysaccharide deacetylase family.

This is an uncharacterized protein from Geobacillus stearothermophilus (Bacillus stearothermophilus).